A 318-amino-acid chain; its full sequence is Deoxymugineic acid synthase 1 (318 aa).

NADP(+) is bound at residue Asp-48. The active-site Proton donor is the Tyr-53. His-116 contacts substrate. NADP(+) is bound by residues 162–163 (CN), Gln-184, 262–270 (FDEARMREN), and 277–285 (ELTEEERQR).

The protein belongs to the aldo/keto reductase family. Confined to cells participating in long distance transport (e.g. in the parts of pericycle cells adjacent to the protoxylem and metaxylem) in roots and to vascular bundles in shoots.

It carries out the reaction 2'-deoxymugineate + NAD(+) = 3''-deamino-3''-oxonicotianamine + NADH + H(+). The catalysed reaction is 2'-deoxymugineate + NADP(+) = 3''-deamino-3''-oxonicotianamine + NADPH + H(+). It participates in siderophore biosynthesis. Catalyzes the reduction of a 3''-keto intermediate during the biosynthesis of 2'-deoxymugineic acid (DMA) from L-Met. Involved in the formation of phytosiderophores (MAs) belonging to the mugineic acid family and required to acquire iron. The polypeptide is Deoxymugineic acid synthase 1 (Oryza sativa subsp. japonica (Rice)).